The following is a 123-amino-acid chain: NADH-quinone oxidoreductase subunit A (123 aa).

The next 3 membrane-spanning stretches (helical) occupy residues 11–31, 64–84, and 93–113; these read YLPIAIFFGIAVLVSGLIMIL, ICFYLVAILFIIFDLEIAFLV, and IGKIGFFSMMFFLFVLIIGFI.

The protein belongs to the complex I subunit 3 family. In terms of assembly, NDH-1 is composed of 14 different subunits. Subunits NuoA, H, J, K, L, M, N constitute the membrane sector of the complex.

It localises to the cell inner membrane. The catalysed reaction is a quinone + NADH + 5 H(+)(in) = a quinol + NAD(+) + 4 H(+)(out). Functionally, NDH-1 shuttles electrons from NADH, via FMN and iron-sulfur (Fe-S) centers, to quinones in the respiratory chain. The immediate electron acceptor for the enzyme in this species is believed to be ubiquinone. Couples the redox reaction to proton translocation (for every two electrons transferred, four hydrogen ions are translocated across the cytoplasmic membrane), and thus conserves the redox energy in a proton gradient. The polypeptide is NADH-quinone oxidoreductase subunit A (Rickettsia conorii (strain ATCC VR-613 / Malish 7)).